We begin with the raw amino-acid sequence, 185 residues long: UPF0149 protein PFL_5969 (185 aa).

The protein belongs to the UPF0149 family.

The protein is UPF0149 protein PFL_5969 of Pseudomonas fluorescens (strain ATCC BAA-477 / NRRL B-23932 / Pf-5).